A 225-amino-acid chain; its full sequence is Superoxide dismutase [Mn], mitochondrial (225 aa).

The transit peptide at 1-27 (MITAITRTALPRATLRTSLATMSTIRA) directs the protein to the mitochondrion. 4 residues coordinate Mn(2+): His53, His101, Asp187, and His191.

It belongs to the iron/manganese superoxide dismutase family. Mn(2+) is required as a cofactor.

The protein resides in the mitochondrion. The protein localises to the cytoplasm. It catalyses the reaction 2 superoxide + 2 H(+) = H2O2 + O2. Destroys radicals which are normally produced within the cells and which are toxic to biological systems. Functionally, destroys mitochondrial radicals produced by oxidative stress. Its function is as follows. Destroys cytoplasmic radicals produced in low copper environments; a condition which inactivates the cytoplasmic copper-dependent superoxide dismutase SOD1. The protein is Superoxide dismutase [Mn], mitochondrial of Cryptococcus neoformans var. grubii serotype A (strain H99 / ATCC 208821 / CBS 10515 / FGSC 9487) (Filobasidiella neoformans var. grubii).